An 856-amino-acid polypeptide reads, in one-letter code: Facilitated trehalose transporter Tret1 (856 aa).

Disordered regions lie at residues 1-27 (MSGR…GKLK) and 62-202 (DPFL…KATS). At 1–389 (MSGRDNRGAG…LEVYRPTTNP (389 aa)) the chain is on the cytoplasmic side. A compositionally biased stretch (polar residues) spans 69 to 80 (VSPQRHPQTVRT). Positions 133–142 (EIREHRDRQQ) are enriched in basic and acidic residues. Polar residues predominate over residues 170-180 (GNSNTNNNKAA). 5 positions are modified to phosphoserine: S247, S248, S249, S319, and S321. Positions 326–345 (LTSRQHFQQQRSISTDSRKS) are disordered. A compositionally biased stretch (polar residues) spans 329-340 (RQHFQQQRSIST). Residues 390–410 (IFIWTQVLAALSVSLGSLVVG) form a helical membrane-spanning segment. Over 411-439 (FVSAYTSPALVSMTDRNITSFEVTQDAGS) the chain is Extracellular. An N-linked (GlcNAc...) asparagine glycan is attached at N427. The helical transmembrane segment at 440–460 (WVGGIMPLAGLAGGIAGGPLI) threads the bilayer. The Cytoplasmic segment spans residues 461-472 (EYLGRRNTILAT). A helical transmembrane segment spans residues 473-493 (AVPFIVSSLLIACAVNVAMVL). The Extracellular portion of the chain corresponds to 494–496 (CGR). The chain crosses the membrane as a helical span at residues 497–517 (FLAGFCVGIASLSLPVYLGET). The Cytoplasmic portion of the chain corresponds to 518–527 (VQPEVRGTLG). A helical transmembrane segment spans residues 528-548 (LLPTAFGNIGILLCFVAGSFM). An N-linked (GlcNAc...) asparagine glycan is attached at N549. Residues 549–551 (NWS) are Extracellular-facing. Residues 552-572 (MLAFLGAALPVPFLILMFLIP) traverse the membrane as a helical segment. The Cytoplasmic segment spans residues 573 to 635 (ETPRWFVSRG…ELLKRNNLKP (63 aa)). Residues 636-656 (LSISLGLMFFQQLSGINAVIF) traverse the membrane as a helical segment. Over 657 to 672 (YTVQIFKDAGSTIDGN) the chain is Extracellular. A helical transmembrane segment spans residues 673 to 693 (ICTIIVGVVNFLATFIGIVLI). At 694 to 699 (DRAGRK) the chain is on the cytoplasmic side. The helical transmembrane segment at 700-720 (ILLYVSNIAMILTLFVLGGFF) threads the bilayer. The Extracellular segment spans residues 721–739 (YCKAHGPDVSNLGWLPLTC). Residues 740 to 760 (FVIYILGFSLGFGPIPWLMMG) traverse the membrane as a helical segment. Over 761 to 766 (EILPAK) the chain is Cytoplasmic. The helical transmembrane segment at 767 to 787 (IRGSAASVATAFNWSCTFVVT) threads the bilayer. Residues 788–800 (KTFQDLTVAMGAH) lie on the Extracellular side of the membrane. Residues 801–821 (GAFWLFGAICFVGLFFVIIYV) traverse the membrane as a helical segment. The Cytoplasmic portion of the chain corresponds to 822 to 856 (PETQGKTLEDIERKMMGRVRRMSSVANIKPLSFNM). 2 positions are modified to phosphoserine: S844 and S845.

This sequence belongs to the major facilitator superfamily. Sugar transporter (TC 2.A.1.1) family. Trehalose transporter subfamily.

The protein resides in the cell membrane. Functionally, low-capacity facilitative transporter for trehalose. Does not transport maltose, sucrose or lactose. Mediates the bidirectional transfer of trehalose. Responsible for the transport of trehalose synthesized in the fat body and the incorporation of trehalose into other tissues that require a carbon source, thereby regulating trehalose levels in the hemolymph. The polypeptide is Facilitated trehalose transporter Tret1 (Drosophila erecta (Fruit fly)).